A 131-amino-acid polypeptide reads, in one-letter code: Profilin-1 (131 aa).

It belongs to the profilin family. Occurs in many kinds of cells as a complex with monomeric actin in a 1:1 ratio.

The protein resides in the cytoplasm. It localises to the cytoskeleton. Functionally, binds to actin and affects the structure of the cytoskeleton. At high concentrations, profilin prevents the polymerization of actin, whereas it enhances it at low concentrations. By binding to PIP2, it inhibits the formation of IP3 and DG. In Ambrosia artemisiifolia (Common ragweed), this protein is Profilin-1.